We begin with the raw amino-acid sequence, 1073 residues long: Pleckstrin homology domain-containing family G member 5 (1073 aa).

5 disordered regions span residues 1–28 (MGTG…SQLL), 91–135 (VSTR…ARRR), 217–261 (PGDE…ESSL), 278–309 (GEAG…GINE), and 367–388 (SWEE…RLED). 2 stretches are compositionally biased toward basic and acidic residues: residues 217 to 231 (PGDE…KDSK) and 249 to 260 (ERVDPQSRRESS). A compositionally biased stretch (acidic residues) spans 367–381 (SWEEEEEDDEEDEES). Residues 406–598 (HQQEAVWELL…ERFIHHVNTC (193 aa)) form the DH domain. The PH domain maps to 654-754 (QLLLEGSLRM…WVDTIYNAQN (101 aa)). 3 disordered regions span residues 762 to 818 (QLSA…TSDG), 833 to 873 (TLSS…GPVD), and 899 to 925 (PVVE…TPVQ). Residues 777–790 (LEEEEDEQEEEGEE) show a composition bias toward acidic residues. 2 stretches are compositionally biased toward polar residues: residues 791–809 (SGTS…SNSL) and 844–864 (VSSQ…TPTS). Thr793 is modified (phosphothreonine). Position 798 is a phosphoserine (Ser798). Residues 900–915 (VVEPAPVPQTPSPQPS) show a composition bias toward pro residues. Thr909 carries the phosphothreonine modification. 3 positions are modified to phosphoserine: Ser911, Ser936, and Ser941. Residues 993–1046 (MCDPCHGPQLSESENRPSHMTGGPADSARRRCREMPSGTMSRVQSEPPSGVSAQ) are disordered. A compositionally biased stretch (polar residues) spans 1030–1039 (GTMSRVQSEP).

Interacts with GIPC1/synectin and RHOA. As to expression, expressed in neurons and glial cells of the peripheral nervous system, with highest levels of expression in the brain and sciatic nerve endoneurium. Isoform 2 is expressed at detectable levels only in malignant cells.

It is found in the cytoplasm. The protein resides in the perinuclear region. Its subcellular location is the cell membrane. The protein localises to the cell junction. It localises to the cell projection. It is found in the lamellipodium. Its function is as follows. Functions as a guanine exchange factor (GEF) for RAB26 and thus regulates autophagy of synaptic vesicles in axon terminal of motoneurons. Involved in the control of neuronal cell differentiation. Plays a role in angiogenesis through regulation of endothelial cells chemotaxis. Also affects the migration, adhesion, and matrix/bone degradation in macrophages and osteoclasts. The sequence is that of Pleckstrin homology domain-containing family G member 5 (Plekhg5) from Mus musculus (Mouse).